The chain runs to 274 residues: Protein-export membrane protein SecF (274 aa).

Transmembrane regions (helical) follow at residues 14 to 34, 121 to 141, 143 to 163, 175 to 197, 217 to 237, and 247 to 267; these read LLIL…ALGV, SVKV…FAIF, KPLL…DALG, ASFA…LSMY, TGIT…LLSM, and VVIF…AWVI.

Belongs to the SecD/SecF family. SecF subfamily. Part of the protein translocation apparatus. Forms a complex with SecD.

It is found in the cell membrane. Its function is as follows. Involved in protein export. The protein is Protein-export membrane protein SecF of Methanopyrus kandleri (strain AV19 / DSM 6324 / JCM 9639 / NBRC 100938).